The chain runs to 381 residues: CCN family member 1 (381 aa).

An N-terminal signal peptide occupies residues 1-24; that stretch reads MSSRIARALALVVTLLHLTRLALS. The IGFBP N-terminal domain maps to 25-94; that stretch reads TCPAACHCPL…TALKGICRAQ (70 aa). Cystine bridges form between cysteine 26–cysteine 50, cysteine 30–cysteine 52, cysteine 32–cysteine 53, cysteine 39–cysteine 56, cysteine 64–cysteine 78, and cysteine 70–cysteine 91. The region spanning 98–164 is the VWFC domain; it reads RPCEYNSRIY…GQCCEEWVCD (67 aa). Position 188 is a phosphoserine; by FAM20C (serine 188). Positions 228–273 constitute a TSP type-1 domain; it reads KCIVQTTSWSQCSKTCGTGISTRVTNDNPECRLVKETRICEVRPCG. A heparin-binding region spans residues 279-315; sequence SLKKGKKCSKTKKSPEPVRFTYAGCLSVKKYRPKYCG. Intrachain disulfides connect cysteine 286–cysteine 323, cysteine 303–cysteine 337, cysteine 314–cysteine 353, cysteine 317–cysteine 355, and cysteine 322–cysteine 359. Positions 286 to 360 constitute a CTCK domain; that stretch reads CSKTKKSPEP…QSCKCNYNCP (75 aa).

This sequence belongs to the CCN family. As to quaternary structure, interaction with integrins is heparin- and cell-type-dependent and promotes cell adhesion. In skin fibroblasts it binds ITGA6/ITGB1, in endothelial cells, binds ITGAV/ITGB3 and in platelets, ITGA2B/ITGB3. Binds, in vitro, ITGAV/ITGB5.

Its subcellular location is the secreted. Promotes cell proliferation, chemotaxis, angiogenesis and cell adhesion. Appears to play a role in wound healing by up-regulating, in skin fibroblasts, the expression of a number of genes involved in angiogenesis, inflammation and matrix remodeling including VEGA-A, VEGA-C, MMP1, MMP3, TIMP1, uPA, PAI-1 and integrins alpha-3 and alpha-5. CCN1-mediated gene regulation is dependent on heparin-binding. Down-regulates the expression of alpha-1 and alpha-2 subunits of collagen type-1. Promotes cell adhesion and adhesive signaling through integrin alpha-6/beta-1, cell migration through integrin alpha-v/beta-5 and cell proliferation through integrin alpha-v/beta-3. The protein is CCN family member 1 of Homo sapiens (Human).